The primary structure comprises 545 residues: RAN GTPase-activating protein 2 (545 aa).

Residues 1–116 (MADILDSRPH…VAARELISED (116 aa)) form a WPP region. LRR repeat units lie at residues 213–236 (GSILSSLNLSDNALGEKGVRAFGA), 241–264 (LSSLEELYLMNDGISKEAAQAVSE), 269–296 (TENLRVLHFHNNMTGDEGALAIAEVVKR), 325–348 (CTHMEKLDLRDNMFGTEAGVSLSK), 353–380 (FKHMTELYLSYLNLEDEGAIAIVNALKE), 382–405 (ASPIEVLEMAGNDITVEAASAIAA), 410–433 (KQDLNKLNLSENELKDEGCVQIAN), 439–462 (HSKLQYIDMSTNYIRRAGARALAH), and 467–494 (KEAFKLLNIDGNIISEEGIEELKEIFKK). A disordered region spans residues 496–545 (PELLGALDENDPDGEEDDDDEEDEEDEENEGNGNGELESKLKNLEVNQED). Over residues 503-525 (DENDPDGEEDDDDEEDEEDEENE) the composition is skewed to acidic residues.

It belongs to the RNA1 family. In terms of assembly, homodimer. Interacts with WIP1 and WIP2 through its WPP domain. Component of Ran complexes at least composed of WIT1 or WIT2, RANGAP1 or RANGAP2, and WIP1 or WIP2 or WIP3. Interacts with WIT1.

The protein localises to the cytoplasm. Its subcellular location is the nucleus membrane. The protein resides in the cytoskeleton. It localises to the spindle. It is found in the phragmoplast. Its function is as follows. GTPase activator for the nuclear Ras-related regulatory protein Ran, converting it to the putatively inactive GDP-bound state. The sequence is that of RAN GTPase-activating protein 2 (RANGAP2) from Arabidopsis thaliana (Mouse-ear cress).